Reading from the N-terminus, the 262-residue chain is Mitochondrial calcium uniporter regulator 1 (262 aa).

Positions Glu-138–Lys-175 form a coiled coil. Residues Thr-239–Trp-261 form a helical membrane-spanning segment.

Belongs to the CCDC90 family.

Its subcellular location is the mitochondrion inner membrane. Its function is as follows. Key regulator of mitochondrial calcium uniporter (mcu) required for calcium entry into mitochondrion. The polypeptide is Mitochondrial calcium uniporter regulator 1 (Xenopus tropicalis (Western clawed frog)).